Reading from the N-terminus, the 210-residue chain is Thymidylate kinase (210 aa).

10–17 (GPEGAGKS) provides a ligand contact to ATP.

This sequence belongs to the thymidylate kinase family.

It carries out the reaction dTMP + ATP = dTDP + ADP. Functionally, phosphorylation of dTMP to form dTDP in both de novo and salvage pathways of dTTP synthesis. This chain is Thymidylate kinase, found in Ectopseudomonas mendocina (strain ymp) (Pseudomonas mendocina).